The chain runs to 466 residues: Glutamate--tRNA ligase (466 aa).

The short motif at 10–20 is the 'HIGH' region element; it reads PSPTGALHIGG. Zn(2+) is bound by residues C99, C101, C126, and D128. The short motif at 239 to 243 is the 'KMSKS' region element; it reads KLSKR. K242 serves as a coordination point for ATP.

It belongs to the class-I aminoacyl-tRNA synthetase family. Glutamate--tRNA ligase type 1 subfamily. Monomer. It depends on Zn(2+) as a cofactor.

It localises to the cytoplasm. The enzyme catalyses tRNA(Glu) + L-glutamate + ATP = L-glutamyl-tRNA(Glu) + AMP + diphosphate. Functionally, catalyzes the attachment of glutamate to tRNA(Glu) in a two-step reaction: glutamate is first activated by ATP to form Glu-AMP and then transferred to the acceptor end of tRNA(Glu). The sequence is that of Glutamate--tRNA ligase from Pelagibacter ubique (strain HTCC1062).